The sequence spans 433 residues: Shufflon protein C' (433 aa).

Residues 1 to 361 (MKKYDRGWAS…TGAILSCQSG (361 aa)) are constant region. The segment at 362 to 433 (RWSGGNKINY…HVDAYCCPFN (72 aa)) is variable region.

In Escherichia coli, this protein is Shufflon protein C'.